A 313-amino-acid chain; its full sequence is Ribosomal RNA small subunit methyltransferase H (313 aa).

Residues 35–37 (GGH), aspartate 55, phenylalanine 81, aspartate 103, and glutamine 110 contribute to the S-adenosyl-L-methionine site.

Belongs to the methyltransferase superfamily. RsmH family.

It is found in the cytoplasm. It carries out the reaction cytidine(1402) in 16S rRNA + S-adenosyl-L-methionine = N(4)-methylcytidine(1402) in 16S rRNA + S-adenosyl-L-homocysteine + H(+). Specifically methylates the N4 position of cytidine in position 1402 (C1402) of 16S rRNA. The sequence is that of Ribosomal RNA small subunit methyltransferase H from Pseudomonas syringae pv. tomato (strain ATCC BAA-871 / DC3000).